The following is a 581-amino-acid chain: Protein SPT2 homolog (581 aa).

A compositionally biased stretch (low complexity) spans 26–35 (YYSTKYSPPK). Disordered regions lie at residues 26–50 (YYST…NIQK) and 145–495 (QEDK…EYDS). Positions 36–76 (KQSKESKQLSSNIQKFLQKKEAEEAEKKRLERQKLNDLLAK) form a coiled coil. Over residues 162-181 (SGTKERVKAAITREREEAKG) the composition is skewed to basic and acidic residues. 2 stretches are compositionally biased toward polar residues: residues 182-197 (NTRQ…SSAT) and 204-213 (VARSYSTSKT). Basic and acidic residues-rich tracts occupy residues 218 to 236 (NAEK…EQRR) and 256 to 312 (LAEK…KETP). Residues 276–307 (ERLLSAREKRELEERQRQQEQRAQRLKMRESE) adopt a coiled-coil conformation. Residues 352–376 (SSASSTSLSSSNSHSSASRSSVSSS) are compositionally biased toward low complexity. Residues 447–461 (TRQTPSSDVQRSQGG) show a composition bias toward polar residues. Positions 486–495 (DDDDEDEYDS) are enriched in acidic residues.

This sequence belongs to the SPT2 family.

The chain is Protein SPT2 homolog from Drosophila melanogaster (Fruit fly).